Consider the following 126-residue polypeptide: Glycine--tRNA ligase beta subunit (126 aa).

The protein belongs to the class-II aminoacyl-tRNA synthetase family. Tetramer of two alpha and two beta subunits.

The protein resides in the cytoplasm. It carries out the reaction tRNA(Gly) + glycine + ATP = glycyl-tRNA(Gly) + AMP + diphosphate. The protein is Glycine--tRNA ligase beta subunit (glyS) of Neisseria gonorrhoeae.